The following is a 487-amino-acid chain: DEAD-box ATP-dependent RNA helicase CshA (487 aa).

Residues 3-31 carry the Q motif motif; sequence ITFQDFQLSSDLTKAIKRMGFEEATPIQA. The 171-residue stretch at 34-204 folds into the Helicase ATP-binding domain; that stretch reads IPLGLANKDV…ERFMTNPEHV (171 aa). 47–54 serves as a coordination point for ATP; that stretch reads AQTGTGKT. Positions 152-155 match the DEAD box motif; it reads DEAD. The region spanning 215–375 is the Helicase C-terminal domain; the sequence is NIQQFYLEVH…RMKAPTLDEA (161 aa). A compositionally biased stretch (basic and acidic residues) spans 428–440; the sequence is DNTPVRLTEEAPL. Residues 428–487 are disordered; it reads DNTPVRLTEEAPLRTKRNKNHHHRSSKRRDGGGYRGKNNRSSYDKKRSSNDRRQKKSYNS. Residues 441–454 are compositionally biased toward basic residues; sequence RTKRNKNHHHRSSK. The segment covering 469–479 has biased composition (basic and acidic residues); sequence SYDKKRSSNDR.

This sequence belongs to the DEAD box helicase family. CshA subfamily. As to quaternary structure, oligomerizes, may be a member of the RNA degradosome.

It is found in the cytoplasm. It carries out the reaction ATP + H2O = ADP + phosphate + H(+). Its function is as follows. DEAD-box RNA helicase possibly involved in RNA degradation. Unwinds dsRNA in both 5'- and 3'-directions, has RNA-dependent ATPase activity. The protein is DEAD-box ATP-dependent RNA helicase CshA of Bacillus licheniformis (strain ATCC 14580 / DSM 13 / JCM 2505 / CCUG 7422 / NBRC 12200 / NCIMB 9375 / NCTC 10341 / NRRL NRS-1264 / Gibson 46).